A 113-amino-acid polypeptide reads, in one-letter code: Hydrogenase maturation factor HypA (113 aa).

Ni(2+) is bound at residue histidine 2. Zn(2+)-binding residues include cysteine 73, cysteine 76, cysteine 89, and cysteine 92.

This sequence belongs to the HypA/HybF family.

Involved in the maturation of [NiFe] hydrogenases. Required for nickel insertion into the metal center of the hydrogenase. This chain is Hydrogenase maturation factor HypA, found in Prosthecochloris aestuarii (strain DSM 271 / SK 413).